A 142-amino-acid polypeptide reads, in one-letter code: Large ribosomal subunit protein uL16 (142 aa).

The protein belongs to the universal ribosomal protein uL16 family. Part of the 50S ribosomal subunit.

Functionally, binds 23S rRNA and is also seen to make contacts with the A and possibly P site tRNAs. The protein is Large ribosomal subunit protein uL16 of Pseudothermotoga lettingae (strain ATCC BAA-301 / DSM 14385 / NBRC 107922 / TMO) (Thermotoga lettingae).